The chain runs to 218 residues: Cytochrome b6 (218 aa).

Residues 35 to 55 (IFYCLGGITLVCFLIQFATGF) form a helical membrane-spanning segment. Residue Cys38 coordinates heme c. Heme b-binding residues include His89 and His103. A run of 3 helical transmembrane segments spans residues 93 to 113 (ASMM…TGGF), 119 to 139 (LTWV…VTGY), and 189 to 209 (LHTF…FLMI). Residues His190 and His205 each coordinate heme b.

The protein belongs to the cytochrome b family. PetB subfamily. In terms of assembly, the 4 large subunits of the cytochrome b6-f complex are cytochrome b6, subunit IV (17 kDa polypeptide, PetD), cytochrome f and the Rieske protein, while the 4 small subunits are PetG, PetL, PetM and PetN. The complex functions as a dimer. It depends on heme b as a cofactor. Heme c is required as a cofactor.

The protein resides in the cellular thylakoid membrane. Component of the cytochrome b6-f complex, which mediates electron transfer between photosystem II (PSII) and photosystem I (PSI), cyclic electron flow around PSI, and state transitions. The polypeptide is Cytochrome b6 (Prochlorococcus marinus (strain MIT 9515)).